The primary structure comprises 120 residues: HTH-type transcriptional regulator MerD (120 aa).

Residues 3-72 form the HTH merR-type domain; that stretch reads AYTVSQLAHN…LDALARLCRA (70 aa). The H-T-H motif DNA-binding region spans 6-25; it reads VSQLAHNAGVSVHIVRDYLV.

The protein is HTH-type transcriptional regulator MerD (merD) of Shigella flexneri.